The following is a 577-amino-acid chain: Probable HECT-type ubiquitin ligase-interacting protein creD (577 aa).

2 disordered regions span residues 376–398 (LDPAGYRTPGPGSGPGTPFGTLS) and 428–566 (NLHA…EEER). Composition is skewed to polar residues over residues 428–447 (NLHASRHSNPSPSESENQLE) and 460–472 (SSGSNTHSLTSPE). Basic and acidic residues predominate over residues 473 to 486 (LSRRPSDEVDHDHV). Polar residues predominate over residues 528–544 (SPQQAHVRSANRSSSYF).

It belongs to the arrestin family. As to quaternary structure, interacts with hulA.

Functionally, component of the regulatory network controlling carbon source utilization through ubiquitination and deubiquitination involving creA, creB, creC, creD and acrB. May be involved in signaling by recognizing appropriately phosphorylated substrates via its arrestin domains and then recruit a HECT-type ubiquitin ligase such as hulA, leading to ubiquitination of the substrate, providing a link between ubiquitination and phosphorylation in protein regulation and stability. This chain is Probable HECT-type ubiquitin ligase-interacting protein creD (creD), found in Aspergillus terreus (strain NIH 2624 / FGSC A1156).